We begin with the raw amino-acid sequence, 201 residues long: Lymphocyte antigen 6 complex locus protein G5b (201 aa).

The signal sequence occupies residues 1–18 (MKVHMLVGVLVMVGFTVG). Residues 26-118 (RTCHFCLVED…SPQLQSSLPE (93 aa)) enclose the UPAR/Ly6 domain. Cystine bridges form between Cys-28–Cys-55, Cys-31–Cys-40, Cys-47–Cys-73, Cys-81–Cys-98, and Cys-99–Cys-104. 2 N-linked (GlcNAc...) asparagine glycosylation sites follow: Asn-141 and Asn-183.

As to quaternary structure, forms oligomer. In terms of processing, N-glycosylated.

It is found in the secreted. In Homo sapiens (Human), this protein is Lymphocyte antigen 6 complex locus protein G5b (LY6G5B).